A 299-amino-acid chain; its full sequence is Very long chain fatty acid elongase 5 (299 aa).

At Met-1 the chain carries N-acetylmethionine. The next 7 membrane-spanning stretches (helical) occupy residues 26 to 46 (WFLLDNYVPTLVCSILYLLIV), 64 to 84 (ILVVYNLGLTLLSLYMFCELV), 112 to 132 (VLWWYYFSKLIEFMDTFFFIL), 139 to 158 (ITVLHVYHHASMLNIWWFVM), 168 to 187 (FGATLNSFIHVLMYSYYGLS), 205 to 225 (GQLLQFVLTIIQTSCGVIWPC), and 226 to 246 (TFPLGWLYFQIGYMISLITLF). Ser-285 carries the phosphoserine modification.

This sequence belongs to the ELO family. ELOVL5 subfamily. As to quaternary structure, interacts with TECR.

The protein resides in the endoplasmic reticulum membrane. It is found in the cell projection. The protein localises to the dendrite. The enzyme catalyses a very-long-chain acyl-CoA + malonyl-CoA + H(+) = a very-long-chain 3-oxoacyl-CoA + CO2 + CoA. The catalysed reaction is (6Z,9Z,12Z)-octadecatrienoyl-CoA + malonyl-CoA + H(+) = (8Z,11Z,14Z)-3-oxoeicosatrienoyl-CoA + CO2 + CoA. It catalyses the reaction (9Z,12Z,15Z)-octadecatrienoyl-CoA + malonyl-CoA + H(+) = (11Z,14Z,17Z)-3-oxoeicosatrienoyl-CoA + CO2 + CoA. It carries out the reaction (9Z)-hexadecenoyl-CoA + malonyl-CoA + H(+) = 3-oxo-(11Z)-octadecenoyl-CoA + CO2 + CoA. The enzyme catalyses (9Z)-octadecenoyl-CoA + malonyl-CoA + H(+) = 3-oxo-(11Z)-eicosenoyl-CoA + CO2 + CoA. The catalysed reaction is (11Z)-octadecenoyl-CoA + malonyl-CoA + H(+) = 3-oxo-(13Z)-eicosenoyl-CoA + CO2 + CoA. It catalyses the reaction (9Z,12Z)-octadecadienoyl-CoA + malonyl-CoA + H(+) = (11Z,14Z)-3-oxoicosa-11,14-dienoyl-CoA + CO2 + CoA. It carries out the reaction (6Z,9Z,12Z,15Z)-octadecatetraenoyl-CoA + malonyl-CoA + H(+) = (8Z,11Z,14Z,17Z)-3-oxoicosatetraenoyl-CoA + CO2 + CoA. The enzyme catalyses (5Z,8Z,11Z,14Z)-eicosatetraenoyl-CoA + malonyl-CoA + H(+) = (7Z,10Z,13Z,16Z)-3-oxodocosatetraenoyl-CoA + CO2 + CoA. The catalysed reaction is (5Z,8Z,11Z,14Z,17Z)-eicosapentaenoyl-CoA + malonyl-CoA + H(+) = 3-oxo-(7Z,10Z,13Z,16Z,19Z)-docosapentaenoyl-CoA + CO2 + CoA. Its pathway is lipid metabolism; polyunsaturated fatty acid biosynthesis. Catalyzes the first and rate-limiting reaction of the four reactions that constitute the long-chain fatty acids elongation cycle. This endoplasmic reticulum-bound enzymatic process allows the addition of 2 carbons to the chain of long- and very long-chain fatty acids (VLCFAs) per cycle. Condensing enzyme that acts specifically toward polyunsaturated acyl-CoA with the higher activity toward C18:3(n-6) acyl-CoA. May participate in the production of monounsaturated and of polyunsaturated VLCFAs of different chain lengths that are involved in multiple biological processes as precursors of membrane lipids and lipid mediators. In conditions where the essential linoleic and alpha linoleic fatty acids are lacking it is also involved in the synthesis of Mead acid from oleic acid. This Bos taurus (Bovine) protein is Very long chain fatty acid elongase 5.